Reading from the N-terminus, the 2242-residue chain is MATLFLDDGSSFKGRLFGASSTVSGEVVFQTGMVGYPEALTDPSYLSQILVLTYPLIGNYGIPKDEEDEHGLSKWFESAKIHAAALVIGENSQNPSHWSSVRSLDQRLKEHGIPALEGIDTRSLTKKIREKGTLLGKLVIDGTDENSLPYDDPNKRHLVKEVSIKEPKVYHPSGNVKIMAVDCGMKYNQIRSLCKRGAAVTVVPWDYLFDSNEFDGLFISNGPGDPEYCQQTINNVKKAISEEKPKPLFGICLGHQILSLAIGAKTYKMKYGNRGHNQPCIHEGTQRCFYTSQNHGFAVEPCSLPRDWSVLFTNANDQSNEGIIHNSKPLFSVQFHPEHKAGPTDLVDLFDIFLECARDVKLGVNLDKTVKGRVISHYSFKNGTENSKTPPGRIQPHKVLILGSGGLSIGQAGEFDYSGSQAIKALKEENVQSVLINPNIATVQTSKGLADKVYFLPITPEYVTQVIMNERPDGILLTFGGQTALNCGVELQKRGVLEKYHVRVLGTPVSSIEMTEDRKIFVEKMAEINEYVVPSEAAFTLEQAQGAAERLGYPVLVRAAFALGGLGSGFAQNKEELVTLVTQAFAHTSQILVDKSLKGWKEIEYEVVRDAYDNCITVCNMENVDPLGIHTGESIVVAPSQTLNDKEYNLLRTTAIKVIRHLGVVGECNIQYALSPESEQYFIIEVNARLSRSSALASKATGYPLAYVAAKLALGIPLPVLRNSVTNSTTANYEPSLDYCVVKVPRWDLSKFLRLSTKIGSSMKSVGEVMAIGRNFEEAFQKALRMVDENCVGFDHTLKPASDEELETPTDKRIFVLAAALRAGYEIDRLYELTKIDKWFLHKMKNIVEYSLKLSELYMKDEVPRHDLLKVKRLGFSDKQIAMAIQSTELAVRRLRQEWKILPVVKQIDTVAAEWPAQTNYLYLTYNGEGHDLDFTKPHVMVIGSGVYRIGSSVEFDWCAVRCIQQLRKMGYKTRMVNYNPETVSTDYDMCDRLYFDEISFEVVMDIYELENPEGIILSMGGQLPNNIAMDLHRQQCRILGTSPESIDTAENRFKFSRMLDTIGISQPRWKELSDTESSKQFCTKVGYPCLIRPSYVLSGVAMNVAYSDNDLEKFLSSAVAVSKEHPVVISKFIQEAKEIDVDAVACDGVVIAVAISEHVENAGVHSGDATLVTPPQDLNQKTTERIKAIVHAIGQELQATGPFNLQLIAKDDQLKVIECNVRVSRSFPFVSKTLGVDMIALATKVIMGEEVEPVGLMTGTGVVGVKVPQFSFSRLAGADVVLGVEMTSTGEVACFGENRYEAYLKAMLSTGFKIPKKNILLSIGSYKNKSELLSTVQSLEQLGYNLYASLGTADFYTEHGVKIKAVDWPFEDTDNGCPLKERHRNIMDYLEENHFDLVINLSMRNSGGRRLSSFVTKGYRTRRLAVDYSVPLIIDIKCTKLFVEALRLVGDTPPVKTHIDSMSSHKLIRLPGLIDVHVHLREPGGTHKEDFASGTAAALAGGVTMVCAMPNTNPAITDQTSFALVQKLATAGARCDFALFLGASSDNADVLPLISNSAAGLKMYLNDTFSTLKMDNVSLWMEHFEKWPKHLPIVVHAERQTVAAILMVAQLYQRPVHICHVARKEEIQIIRAAKQKGVQVTCEVAPHHLFLNEEDLESIGHGKGQVRPMLSTKEDVNALWENLDVIDCFATDHAPHSVEEKNSDSPPPGYPGLETMLPLLLTAVSEGRLTIDDLVKRLYENPRKIFSLPVQENTYVEVDLEQEWIIPSYMQFTKSKWTPFEGKKVKGRVRRVVLRGEVAYIDGQVLVPPGYGQDVRAWPLGVPLPPPPTTVKTPEHSKPTQTETVRTRTASPRRLASSGPAVDARFHLPPRIHRCSDPGLPNAEGEYKEKPVKKFIEQDTVSQDGYIYPPPVSRLLSPQNLAAQAVPHPYSLLLHPFVGQHILSVKRFTKDQLSHLFNVAHNLRLTVQKDRSLDILKGKVMASMFYEVSTRTSSSFRAAMHRLGGSVIHFSEATSSVQKGESLLDSVQTMSCYVDVVVLRHPEPGAVELAAKHSRKPIINAGDGVGEHPTQALLDIFTIREELGTVNGMTITMVGDLKHGRTVHSLAYLLTLYRVNLRYVTPRNLRMPPNIIRFLASRGIKQEEFDSLEEALPDTDVLYMTRIQKERFASEEEYEACFGQFILTPHIMTKGKKKMVVMHPLPRVNEVSVEVDSDPRAAYFRQAENGMYVRMALLATVLGKF.

The GATase (Glutamine amidotransferase) stretch occupies residues 1 to 365 (MATLFLDDGS…CARDVKLGVN (365 aa)). L-glutamine-binding residues include S44, G222, and G224. In terms of domain architecture, Glutamine amidotransferase type-1 spans 177–363 (KIMAVDCGMK…LECARDVKLG (187 aa)). C252 serves as the catalytic Nucleophile; for GATase activity. L253, Q256, N294, G296, and F297 together coordinate L-glutamine. Active-site for GATase activity residues include H336 and E338. The linker stretch occupies residues 366-397 (LDKTVKGRVISHYSFKNGTENSKTPPGRIQPH). The tract at residues 398–937 (KVLILGSGGL…GEGHDLDFTK (540 aa)) is CPSase A. The CPSase (Carbamoyl-phosphate synthase) stretch occupies residues 398–1462 (KVLILGSGGL…TPPVKTHIDS (1065 aa)). R518, R558, G564, G565, K595, E602, G628, I629, H630, Q671, and E685 together coordinate ATP. 2 ATP-grasp domains span residues 522-714 (VEKM…KLAL) and 1057-1248 (SRML…KVIM). Mg(2+) contacts are provided by Q671, E685, and N687. Q671, E685, and N687 together coordinate Mn(2+). The segment at 938-1462 (PHVMVIGSGV…TPPVKTHIDS (525 aa)) is CPSase B. R1093, K1132, I1134, E1139, G1164, V1165, H1166, S1167, Q1207, and E1219 together coordinate ATP. Q1207, E1219, and N1221 together coordinate Mg(2+). Mn(2+)-binding residues include Q1207, E1219, and N1221. The MGS-like domain occupies 1313–1469 (FKIPKKNILL…IDSMSSHKLI (157 aa)). The tract at residues 1463 to 1796 (MSSHKLIRLP…KGRVRRVVLR (334 aa)) is DHOase (dihydroorotase). Positions 1478 and 1480 each coordinate Zn(2+). (S)-dihydroorotate contacts are provided by R1482 and N1512. Zn(2+)-binding residues include K1563, H1597, C1620, H1621, and E1644. The residue at position 1563 (K1563) is an N6-carboxylysine. Position 1668 (R1668) interacts with (S)-dihydroorotate. D1693 serves as a coordination point for Zn(2+). D1693 functions as the For DHOase activity in the catalytic mechanism. Residues H1697 and P1709 each contribute to the (S)-dihydroorotate site. Residues 1797-1934 (GEVAYIDGQV…QAVPHPYSLL (138 aa)) form a linker region. The segment at 1829–1862 (PTTVKTPEHSKPTQTETVRTRTASPRRLASSGPA) is disordered. The span at 1840–1851 (PTQTETVRTRTA) shows a compositional bias: polar residues. The tract at residues 1935–2242 (LHPFVGQHIL…ALLATVLGKF (308 aa)) is ATCase (Aspartate transcarbamylase). Residues R1992 and T1993 each coordinate carbamoyl phosphate. K2020 contacts L-aspartate. R2041, H2069, and Q2072 together coordinate carbamoyl phosphate. L-aspartate-binding residues include R2102 and R2163. Carbamoyl phosphate is bound by residues L2202 and P2203.

In the N-terminal section; belongs to the CarA family. This sequence in the 2nd section; belongs to the CarB family. It in the 3rd section; belongs to the metallo-dependent hydrolases superfamily. DHOase family. CAD subfamily. The protein in the C-terminal section; belongs to the aspartate/ornithine carbamoyltransferase superfamily. ATCase family. As to quaternary structure, homohexamer. It depends on Mg(2+) as a cofactor. Mn(2+) serves as cofactor. Zn(2+) is required as a cofactor. In terms of tissue distribution, present in the testis but not in the liver.

Its subcellular location is the cytoplasm. It localises to the nucleus. The catalysed reaction is hydrogencarbonate + L-glutamine + 2 ATP + H2O = carbamoyl phosphate + L-glutamate + 2 ADP + phosphate + 2 H(+). It catalyses the reaction L-glutamine + H2O = L-glutamate + NH4(+). The enzyme catalyses hydrogencarbonate + NH4(+) + 2 ATP = carbamoyl phosphate + 2 ADP + phosphate + 2 H(+). It carries out the reaction carbamoyl phosphate + L-aspartate = N-carbamoyl-L-aspartate + phosphate + H(+). The catalysed reaction is (S)-dihydroorotate + H2O = N-carbamoyl-L-aspartate + H(+). It functions in the pathway pyrimidine metabolism; UMP biosynthesis via de novo pathway; (S)-dihydroorotate from bicarbonate: step 1/3. Its pathway is pyrimidine metabolism; UMP biosynthesis via de novo pathway; (S)-dihydroorotate from bicarbonate: step 2/3. It participates in pyrimidine metabolism; UMP biosynthesis via de novo pathway; (S)-dihydroorotate from bicarbonate: step 3/3. Its activity is regulated as follows. Allosterically regulated and controlled by phosphorylation. 5-phosphoribose 1-diphosphate is an activator while UMP is an inhibitor of the CPSase reaction. Its function is as follows. Multifunctional protein that encodes the first 3 enzymatic activities of the de novo pyrimidine pathway: carbamoylphosphate synthetase (CPSase; EC 6.3.5.5), aspartate transcarbamylase (ATCase; EC 2.1.3.2) and dihydroorotase (DHOase; EC 3.5.2.3). The CPSase-function is accomplished in 2 steps, by a glutamine-dependent amidotransferase activity (GATase) that binds and cleaves glutamine to produce ammonia, followed by an ammonium-dependent carbamoyl phosphate synthetase, which reacts with the ammonia, hydrogencarbonate and ATP to form carbamoyl phosphate. The endogenously produced carbamoyl phosphate is sequestered and channeled to the ATCase active site. ATCase then catalyzes the formation of carbamoyl-L-aspartate from L-aspartate and carbamoyl phosphate. In the last step, DHOase catalyzes the cyclization of carbamoyl aspartate to dihydroorotate. This Squalus acanthias (Spiny dogfish) protein is Multifunctional protein CAD (CAD).